Consider the following 809-residue polypeptide: Penicillin-binding protein 1A (809 aa).

Over 1-34 (MSDNTKTNSRNKSVKRTKKVKKKKKFGFFKKLFT) the chain is Cytoplasmic. Residues 35–55 (ILFCLFILLSVAASGVIFAIV) form a helical; Signal-anchor for type II membrane protein membrane-spanning segment. Residues 56 to 809 (KTSPNLDING…PNNNTTNTNK (754 aa)) lie on the Extracellular side of the membrane. Residues 74–251 (SQLYDDNNNP…PSAYYPFSQN (178 aa)) are transglycosylase. Glutamate 113 (proton donor; for transglycosylase activity) is an active-site residue. Residues 381–664 (AAATLFDYHT…VAEIWGEIMK (284 aa)) form a transpeptidase region. Serine 422 (acyl-ester intermediate; for transpeptidase activity) is an active-site residue. A disordered region spans residues 694–809 (SPSNLSGDDS…PNNNTTNTNK (116 aa)).

It in the N-terminal section; belongs to the glycosyltransferase 51 family. In the C-terminal section; belongs to the transpeptidase family.

The protein resides in the cell membrane. It catalyses the reaction [GlcNAc-(1-&gt;4)-Mur2Ac(oyl-L-Ala-gamma-D-Glu-L-Lys-D-Ala-D-Ala)](n)-di-trans,octa-cis-undecaprenyl diphosphate + beta-D-GlcNAc-(1-&gt;4)-Mur2Ac(oyl-L-Ala-gamma-D-Glu-L-Lys-D-Ala-D-Ala)-di-trans,octa-cis-undecaprenyl diphosphate = [GlcNAc-(1-&gt;4)-Mur2Ac(oyl-L-Ala-gamma-D-Glu-L-Lys-D-Ala-D-Ala)](n+1)-di-trans,octa-cis-undecaprenyl diphosphate + di-trans,octa-cis-undecaprenyl diphosphate + H(+). The enzyme catalyses Preferential cleavage: (Ac)2-L-Lys-D-Ala-|-D-Ala. Also transpeptidation of peptidyl-alanyl moieties that are N-acyl substituents of D-alanine.. It functions in the pathway cell wall biogenesis; peptidoglycan biosynthesis. Cell wall formation. Synthesis of cross-linked peptidoglycan from the lipid intermediates. The enzyme has a penicillin-insensitive transglycosylase N-terminal domain (formation of linear glycan strands) and a penicillin-sensitive transpeptidase C-terminal domain (cross-linking of the peptide subunits). This Clostridium acetobutylicum (strain ATCC 824 / DSM 792 / JCM 1419 / IAM 19013 / LMG 5710 / NBRC 13948 / NRRL B-527 / VKM B-1787 / 2291 / W) protein is Penicillin-binding protein 1A (pbpA).